The chain runs to 176 residues: MATETNGADVAASSPGMPQLDFSTWGNQIFWLVITLVIIYMVLSKVALPRIAAILSERQGTITNDIATAEDFKAKAKDAEAAYEKALADARAEAQRIVAEAKADIQSDLDVAISKADAEIAAKAAESEKAIAEIRAGAAEAIQQVAKDTAQEIVATFGGKADAKAVDAAVDGQLKG.

The helical transmembrane segment at 29–49 (IFWLVITLVIIYMVLSKVALP) threads the bilayer.

Belongs to the ATPase B chain family. F-type ATPases have 2 components, F(1) - the catalytic core - and F(0) - the membrane proton channel. F(1) has five subunits: alpha(3), beta(3), gamma(1), delta(1), epsilon(1). F(0) has three main subunits: a(1), b(2) and c(10-14). The alpha and beta chains form an alternating ring which encloses part of the gamma chain. F(1) is attached to F(0) by a central stalk formed by the gamma and epsilon chains, while a peripheral stalk is formed by the delta and b chains.

Its subcellular location is the cell inner membrane. In terms of biological role, f(1)F(0) ATP synthase produces ATP from ADP in the presence of a proton or sodium gradient. F-type ATPases consist of two structural domains, F(1) containing the extramembraneous catalytic core and F(0) containing the membrane proton channel, linked together by a central stalk and a peripheral stalk. During catalysis, ATP synthesis in the catalytic domain of F(1) is coupled via a rotary mechanism of the central stalk subunits to proton translocation. Its function is as follows. Component of the F(0) channel, it forms part of the peripheral stalk, linking F(1) to F(0). The b'-subunit is a diverged and duplicated form of b found in plants and photosynthetic bacteria. The chain is ATP synthase subunit b 2 (atpF2) from Roseobacter denitrificans (strain ATCC 33942 / OCh 114) (Erythrobacter sp. (strain OCh 114)).